The chain runs to 391 residues: Na(+)/H(+) antiporter NhaA (391 aa).

The next 12 helical transmembrane spans lie at 9–29 (FQLE…ALII), 36–56 (YLYS…LNIA), 59–79 (LLLW…GLEV), 95–115 (ILPA…YWFI), 123–143 (VAGW…VLAL), 154–174 (LFLM…IALF), 177–197 (GTLS…LIAM), 213–235 (LILW…ALAL), 259–279 (WVAY…SLAG), 293–313 (IAVG…WLAV), 329–349 (ILGV…VGSL), and 364–384 (MGIL…TAMA).

This sequence belongs to the NhaA Na(+)/H(+) (TC 2.A.33) antiporter family.

It localises to the cell inner membrane. It carries out the reaction Na(+)(in) + 2 H(+)(out) = Na(+)(out) + 2 H(+)(in). Its function is as follows. Na(+)/H(+) antiporter that extrudes sodium in exchange for external protons. This chain is Na(+)/H(+) antiporter NhaA, found in Pseudomonas putida (strain GB-1).